Reading from the N-terminus, the 169-residue chain is MSSSNPRGIPPAQFFEFKELSMEEAQGHLEKFQEAIAKYKFMETSVVRRVASLDDKIPDIRKTLQSVQFLKERQGDSFTVTYELNDTLNAKAEVEAKDNVYLWLGANVMLEYTVEEAEALLTQKLNSAEETLKACKEDLEFLRAQVTTMEVNTARVYNYTVLLRKKTKM.

The protein belongs to the prefoldin subunit alpha family. Heterohexamer of two PFD-alpha type and four PFD-beta type subunits.

Binds specifically to cytosolic chaperonin (c-CPN) and transfers target proteins to it. Binds to nascent polypeptide chain and promotes folding in an environment in which there are many competing pathways for nonnative proteins. In Schizosaccharomyces pombe (strain 972 / ATCC 24843) (Fission yeast), this protein is Probable prefoldin subunit 3.